The chain runs to 272 residues: MPLSTSLLGKKSTYKDSYDATLLFKIPRINNRNVLGINNNLPFYGVDIWNTYEISCLNKNGKPLVGIGTFYIPADSENIVESKSFKLYLNSFNNFIVKSIEELEQIILQDLSNVTCAKVTGRIFPINTKIEFGIPSGKNIDNLDIVCNNYGPPDNSLIEYEDVLVEEEIHSNLLKSNCLVTGQPDWGTIVIKYKGKKLKYDSFLRYLISFRNCNEFAEQCAERIFIDIKNAINLDFLSIYIVYTRRGGIDICPYRSTDKSYALPSNKRFIRQ.

80–82 (VES) is a binding site for substrate. 82-83 (SK) provides a ligand contact to NADPH. Residue C178 is the Thioimide intermediate of the active site. The Proton donor role is filled by D185. 217–218 (AE) provides a ligand contact to substrate. 246-247 (RG) is an NADPH binding site.

This sequence belongs to the GTP cyclohydrolase I family. QueF type 2 subfamily. Homodimer.

Its subcellular location is the cytoplasm. It catalyses the reaction 7-aminomethyl-7-carbaguanine + 2 NADP(+) = 7-cyano-7-deazaguanine + 2 NADPH + 3 H(+). Its pathway is tRNA modification; tRNA-queuosine biosynthesis. Catalyzes the NADPH-dependent reduction of 7-cyano-7-deazaguanine (preQ0) to 7-aminomethyl-7-deazaguanine (preQ1). This is NADPH-dependent 7-cyano-7-deazaguanine reductase from Rickettsia typhi (strain ATCC VR-144 / Wilmington).